Reading from the N-terminus, the 128-residue chain is MSSLQRSAPASQNVSLPLEQVKEALGEVLNALQSPTGSARLEEARENSGNDLGKVLQLLLPAAVQIQQEVLQNYGFSPDGEGVLRFARLVKSYESQDPEIAAMSSKLKSFFLPPLPLPPHAGLSAPSS.

It belongs to the UPF0456 family.

It localises to the cytoplasm. The chain is Protein C10 from Xenopus tropicalis (Western clawed frog).